A 511-amino-acid polypeptide reads, in one-letter code: Bifunctional purine biosynthesis protein PurH (511 aa).

The 145-residue stretch at 1-145 (MKKRALVSVS…KNHKFVSVIV (145 aa)) folds into the MGS-like domain.

This sequence belongs to the PurH family.

It carries out the reaction (6R)-10-formyltetrahydrofolate + 5-amino-1-(5-phospho-beta-D-ribosyl)imidazole-4-carboxamide = 5-formamido-1-(5-phospho-D-ribosyl)imidazole-4-carboxamide + (6S)-5,6,7,8-tetrahydrofolate. The catalysed reaction is IMP + H2O = 5-formamido-1-(5-phospho-D-ribosyl)imidazole-4-carboxamide. It participates in purine metabolism; IMP biosynthesis via de novo pathway; 5-formamido-1-(5-phospho-D-ribosyl)imidazole-4-carboxamide from 5-amino-1-(5-phospho-D-ribosyl)imidazole-4-carboxamide (10-formyl THF route): step 1/1. It functions in the pathway purine metabolism; IMP biosynthesis via de novo pathway; IMP from 5-formamido-1-(5-phospho-D-ribosyl)imidazole-4-carboxamide: step 1/1. The polypeptide is Bifunctional purine biosynthesis protein PurH (Bacillus cereus (strain 03BB102)).